The following is a 252-amino-acid chain: Fructose-1,6-bisphosphatase/inositol-1-monophosphatase (252 aa).

Positions 38, 40, 67, 82, 84, and 85 each coordinate Mg(2+). Substrate is bound by residues 85-87 (DGT), arginine 167, alanine 172, and arginine 191. Residue aspartate 200 coordinates Mg(2+).

It belongs to the inositol monophosphatase superfamily. FBPase class 4 family. In terms of assembly, homodimer. Mg(2+) serves as cofactor. The cofactor is Mn(2+).

The enzyme catalyses beta-D-fructose 1,6-bisphosphate + H2O = beta-D-fructose 6-phosphate + phosphate. The catalysed reaction is a myo-inositol phosphate + H2O = myo-inositol + phosphate. Both FBPase and IMPase activities are inhibited by Ca(2+). In contrast to mammalian I-1-P phosphatases, is only very weakly inhibited by Li(+) (with an IC(50) of about 290 mM). Its function is as follows. Phosphatase with broad specificity; it can dephosphorylate fructose 1,6-bisphosphate, both D and L isomers of inositol-1-phosphate (I-1-P), 2'-AMP, pNPP, inositol-2-phosphate, beta-glycerol phosphate, and alpha-D-glucose-1-phosphate. Cannot hydrolyze glucose-6-phosphate and fructose-6-phosphate. May be involved in the biosynthesis of a unique osmolyte, di-myo-inositol 1,1-phosphate. The polypeptide is Fructose-1,6-bisphosphatase/inositol-1-monophosphatase (suhB) (Archaeoglobus fulgidus (strain ATCC 49558 / DSM 4304 / JCM 9628 / NBRC 100126 / VC-16)).